A 295-amino-acid polypeptide reads, in one-letter code: Ribosomal RNA small subunit methyltransferase A (295 aa).

6 residues coordinate S-adenosyl-L-methionine: Asn-33, Val-35, Gly-60, Glu-81, Asp-111, and Asn-129.

The protein belongs to the class I-like SAM-binding methyltransferase superfamily. rRNA adenine N(6)-methyltransferase family. RsmA subfamily.

It localises to the cytoplasm. The catalysed reaction is adenosine(1518)/adenosine(1519) in 16S rRNA + 4 S-adenosyl-L-methionine = N(6)-dimethyladenosine(1518)/N(6)-dimethyladenosine(1519) in 16S rRNA + 4 S-adenosyl-L-homocysteine + 4 H(+). In terms of biological role, specifically dimethylates two adjacent adenosines (A1518 and A1519) in the loop of a conserved hairpin near the 3'-end of 16S rRNA in the 30S particle. May play a critical role in biogenesis of 30S subunits. The polypeptide is Ribosomal RNA small subunit methyltransferase A (Streptomyces avermitilis (strain ATCC 31267 / DSM 46492 / JCM 5070 / NBRC 14893 / NCIMB 12804 / NRRL 8165 / MA-4680)).